We begin with the raw amino-acid sequence, 275 residues long: Dermonecrotic toxin SpeSicTox-betaIIA2i (275 aa).

The active site involves His5. Residues Glu25 and Asp27 each contribute to the Mg(2+) site. His41 serves as the catalytic Nucleophile. 2 cysteine pairs are disulfide-bonded: Cys45-Cys51 and Cys47-Cys190. Asp85 contributes to the Mg(2+) binding site.

It belongs to the arthropod phospholipase D family. Class II subfamily. Mg(2+) serves as cofactor. Expressed by the venom gland.

The protein localises to the secreted. The enzyme catalyses an N-(acyl)-sphingosylphosphocholine = an N-(acyl)-sphingosyl-1,3-cyclic phosphate + choline. The catalysed reaction is an N-(acyl)-sphingosylphosphoethanolamine = an N-(acyl)-sphingosyl-1,3-cyclic phosphate + ethanolamine. It carries out the reaction a 1-acyl-sn-glycero-3-phosphocholine = a 1-acyl-sn-glycero-2,3-cyclic phosphate + choline. It catalyses the reaction a 1-acyl-sn-glycero-3-phosphoethanolamine = a 1-acyl-sn-glycero-2,3-cyclic phosphate + ethanolamine. Its function is as follows. Dermonecrotic toxins cleave the phosphodiester linkage between the phosphate and headgroup of certain phospholipids (sphingolipid and lysolipid substrates), forming an alcohol (often choline) and a cyclic phosphate. This toxin acts on sphingomyelin (SM). It may also act on ceramide phosphoethanolamine (CPE), lysophosphatidylcholine (LPC) and lysophosphatidylethanolamine (LPE), but not on lysophosphatidylserine (LPS), and lysophosphatidylglycerol (LPG). It acts by transphosphatidylation, releasing exclusively cyclic phosphate products as second products. Induces dermonecrosis, hemolysis, increased vascular permeability, edema, inflammatory response, and platelet aggregation. The polypeptide is Dermonecrotic toxin SpeSicTox-betaIIA2i (Sicarius peruensis (Six-eyed sand spider)).